The primary structure comprises 388 residues: Phosphopentomutase (388 aa).

Mn(2+)-binding residues include D11, D283, H288, D324, H325, and H336.

It belongs to the phosphopentomutase family. Mn(2+) is required as a cofactor.

Its subcellular location is the cytoplasm. The enzyme catalyses 2-deoxy-alpha-D-ribose 1-phosphate = 2-deoxy-D-ribose 5-phosphate. It carries out the reaction alpha-D-ribose 1-phosphate = D-ribose 5-phosphate. It participates in carbohydrate degradation; 2-deoxy-D-ribose 1-phosphate degradation; D-glyceraldehyde 3-phosphate and acetaldehyde from 2-deoxy-alpha-D-ribose 1-phosphate: step 1/2. Isomerase that catalyzes the conversion of deoxy-ribose 1-phosphate (dRib-1-P) and ribose 1-phosphate (Rib-1-P) to deoxy-ribose 5-phosphate (dRib-5-P) and ribose 5-phosphate (Rib-5-P), respectively. In Anaeromyxobacter dehalogenans (strain 2CP-1 / ATCC BAA-258), this protein is Phosphopentomutase.